The primary structure comprises 680 residues: SH3 domain-binding protein 1 (680 aa).

Positions methionine 1–glutamine 11 are enriched in basic residues. Disordered stretches follow at residues methionine 1–threonine 24 and serine 160–threonine 184. The interaction with CGNL1 stretch occupies residues methionine 1–glycine 275. The 182-residue stretch at methionine 81–serine 262 folds into the BAR domain. The segment covering serine 160–asparagine 169 has biased composition (polar residues). 2 positions are modified to phosphoserine: serine 241 and serine 262. In terms of domain architecture, Rho-GAP spans valine 276–phenylalanine 469. Positions proline 470–glutamate 680 are interaction with CD2AP. The tract at residues glutamate 488–glutamate 680 is disordered. Over residues valine 502–alanine 516 the composition is skewed to pro residues. A Phosphoserine modification is found at serine 535. Residues proline 536–alanine 546 are compositionally biased toward polar residues. The segment covering proline 561 to proline 571 has biased composition (pro residues). Serine 582 bears the Phosphoserine mark. Threonine 592 is modified (phosphothreonine). The SH3-binding signature appears at alanine 607 to proline 616. Positions threonine 609–proline 621 are enriched in pro residues. A Phosphoserine modification is found at serine 632. The segment covering histidine 660–arginine 671 has biased composition (pro residues).

As to quaternary structure, interacts with RAC1. Interacts with the exocyst via EXOC4 and EXOC8; required for the localization of both SH3BP1 and the exocyst to the leading edge of migrating cells. Interacts with CD2AP and CGNL1; probably part of a complex at cell junctions. Interacts with CAPZA1; recruits CAPZA1 to forming cell junctions. May interact with AFDN. Interacts with PLXND1; they dissociate upon SEMA3E binding to PLXND1 allowing SH3BP1 to transduce downstream signal through RAC1 inactivation. Interacts with ABL1, GRB2 and SRC (via SH3 domain). As to expression, expressed in all tissues examined. Highest levels found in spleen and brain, lowest in heart and liver.

The protein localises to the cell projection. It is found in the cell junction. Its subcellular location is the tight junction. It localises to the adherens junction. The protein resides in the phagocytic cup. The protein localises to the nucleus. It is found in the cytoplasm. Its subcellular location is the cytosol. Functionally, GTPase activating protein (GAP) which specifically converts GTP-bound Rho-type GTPases including RAC1 and CDC42 in their inactive GDP-bound form. By specifically inactivating RAC1 at the leading edge of migrating cells, it regulates the spatiotemporal organization of cell protrusions which is important for proper cell migration. Also negatively regulates CDC42 in the process of actin remodeling and the formation of epithelial cell junctions. Through its GAP activity toward RAC1 and/or CDC42 plays a specific role in phagocytosis of large particles. Specifically recruited by a PI3 kinase/PI3K-dependent mechanism to sites of large particles engagement, inactivates RAC1 and/or CDC42 allowing the reorganization of the underlying actin cytoskeleton required for engulfment. It also plays a role in angiogenesis and the process of repulsive guidance as part of a semaphorin-plexin signaling pathway. Following the binding of PLXND1 to extracellular SEMA3E it dissociates from PLXND1 and inactivates RAC1, inducing the intracellular reorganization of the actin cytoskeleton and the collapse of cells. This chain is SH3 domain-binding protein 1, found in Mus musculus (Mouse).